We begin with the raw amino-acid sequence, 87 residues long: Small ribosomal subunit protein bS20 (87 aa).

Belongs to the bacterial ribosomal protein bS20 family.

Binds directly to 16S ribosomal RNA. In Alkaliphilus oremlandii (strain OhILAs) (Clostridium oremlandii (strain OhILAs)), this protein is Small ribosomal subunit protein bS20.